The primary structure comprises 107 residues: L-rhamnose mutarotase (107 aa).

Tyr18 is a substrate binding site. The Proton donor role is filled by His22. Residues Tyr41 and 76 to 77 (WW) each bind substrate.

Belongs to the rhamnose mutarotase family. Homodimer.

It is found in the cytoplasm. It carries out the reaction alpha-L-rhamnose = beta-L-rhamnose. It functions in the pathway carbohydrate metabolism; L-rhamnose metabolism. In terms of biological role, involved in the anomeric conversion of L-rhamnose. The sequence is that of L-rhamnose mutarotase from Paraburkholderia xenovorans (strain LB400).